Consider the following 730-residue polypeptide: MEELIVELRLFLELLDHEYLTSTVREKKAVITNILLRIQSSKGFDVKDHAQKQETANSLPAPPQMPLPEIPQPWLPPDSGPPPLPTSSLPEGYYEEAVPLSPGKAPEYITSNYDSDAMSSSYESYDEEEEDGKGKKTRHQWPSEEASMDLVKDAKICAFLLRKKRFGQWTKLLCVIKDTKLLCYKSSKDQQPQMELPLQGCNITYIPKDSKKKKHELKITQQGTDPLVLAVQSKEQAEQWLKVIKEAYSGCSGPVDSECPPPPSSPVHKAELEKKLSSERPSSDGEGVVENGITTCNGKEQVKRKKSSKSEAKGTVSKVTGKKITKIISLGKKKPSTDEQTSSAEEDVPTCGYLNVLSNSRWRERWCRVKDNKLIFHKDRTDLKTHIVSIPLRGCEVIPGLDSKHPLTFRLLRNGQEVAVLEASSSEDMGRWIGILLAETGSSTDPEALHYDYIDVEMSASVIQTAKQTFCFMNRRVISANPYLGGTSNGYAHPSGTALHYDDVPCINGSLKGKKPPVASNGVTGKGKTLSSQPKKADPAAVVKRTGSNAAQYKYGKNRVEADAKRLQTKEEELLKRKEALRNRLAQLRKERKDLRAAIEVNAGRKPQAILEEKLKQLEEECRQKEAERVSLELELTEVKESLKKALAGGVTLGLAIEPKSGTSSPQSPVFRHRTLENSPISSCDTSDTEGPVPVNSAAVLKKSQAAPGSSPCRGHVLRKAKEWELKNGT.

Met1 carries the N-acetylmethionine modification. Residues 47–91 (KDHAQKQETANSLPAPPQMPLPEIPQPWLPPDSGPPPLPTSSLPE) are disordered. Over residues 60-85 (PAPPQMPLPEIPQPWLPPDSGPPPLP) the composition is skewed to pro residues. An SH3-binding motif is present at residues 71–74 (PQPW). An SH2-binding 1 motif is present at residues 94-97 (YEEA). Positions 119–140 (SSSYESYDEEEEDGKGKKTRHQ) are disordered. The PH 1 domain occupies 153–249 (DAKICAFLLR…WLKVIKEAYS (97 aa)). Residues 252-292 (SGPVDSECPPPPSSPVHKAELEKKLSSERPSSDGEGVVENG) form a disordered region. Basic and acidic residues predominate over residues 268 to 283 (HKAELEKKLSSERPSS). Ser282 and Ser283 each carry phosphoserine. Positions 347 to 441 (DVPTCGYLNV…WIGILLAETG (95 aa)) constitute a PH 2 domain. The SH2-binding 2 motif lies at 451–456 (YDYIDV). The tract at residues 512-537 (KGKKPPVASNGVTGKGKTLSSQPKKA) is disordered. Ser548 is modified (phosphoserine). A coiled-coil region spans residues 557-648 (KNRVEADAKR…VKESLKKALA (92 aa)). The segment at 594–637 (DLRAAIEVNAGRKPQAILEEKLKQLEEECRQKEAERVSLELELT) is interaction with F-actin. Ser664, Ser665, and Ser668 each carry phosphoserine. The residue at position 675 (Thr675) is a Phosphothreonine. 2 positions are modified to phosphoserine: Ser679 and Ser687.

Monomer and homomultimer. Interacts via its C-terminus with F-actin; probably involving AFAP1 multimers. Interacts with activated SRC SH3-SH2 domains. Interacts via its PH 1 domain with PRKCA, PRKCB and PRKCI. Post-translationally, phosphorylated on tyrosine residues by SRC. As to expression, low expression in normal breast epithelial cell line MCF-10A and in tumorigenic breast cancer cell lines MCF-7, T-47D and ZR-75-1. Highly expressed in the invasive breast cancer cell lines MDA-MB-231 and MDA-MB-435. Overexpressed in prostate carcinoma.

The protein resides in the cytoplasm. It is found in the cytoskeleton. Its subcellular location is the stress fiber. Functionally, can cross-link actin filaments into both network and bundle structures. May modulate changes in actin filament integrity and induce lamellipodia formation. May function as an adapter molecule that links other proteins, such as SRC and PKC to the actin cytoskeleton. Seems to play a role in the development and progression of prostate adenocarcinoma by regulating cell-matrix adhesions and migration in the cancer cells. The protein is Actin filament-associated protein 1 (AFAP1) of Homo sapiens (Human).